The primary structure comprises 538 residues: Bifunctional purine biosynthesis protein PurH (538 aa).

An MGS-like domain is found at 11 to 158; that stretch reads PDLHRVRRAL…KNHAYTGVVT (148 aa).

It belongs to the PurH family.

The catalysed reaction is (6R)-10-formyltetrahydrofolate + 5-amino-1-(5-phospho-beta-D-ribosyl)imidazole-4-carboxamide = 5-formamido-1-(5-phospho-D-ribosyl)imidazole-4-carboxamide + (6S)-5,6,7,8-tetrahydrofolate. The enzyme catalyses IMP + H2O = 5-formamido-1-(5-phospho-D-ribosyl)imidazole-4-carboxamide. It functions in the pathway purine metabolism; IMP biosynthesis via de novo pathway; 5-formamido-1-(5-phospho-D-ribosyl)imidazole-4-carboxamide from 5-amino-1-(5-phospho-D-ribosyl)imidazole-4-carboxamide (10-formyl THF route): step 1/1. Its pathway is purine metabolism; IMP biosynthesis via de novo pathway; IMP from 5-formamido-1-(5-phospho-D-ribosyl)imidazole-4-carboxamide: step 1/1. The polypeptide is Bifunctional purine biosynthesis protein PurH (Bartonella bacilliformis (strain ATCC 35685 / KC583 / Herrer 020/F12,63)).